Reading from the N-terminus, the 80-residue chain is SPbeta prophage-derived uncharacterized HTH-type transcriptional regulator YotL (80 aa).

The HTH cro/C1-type domain occupies 12 to 67 (LNELMHEYSVSIEDLVECTGLSKQRINDYVGGFKSNMNIGTAMTFADAIGCSIEEL). Positions 23–42 (IEDLVECTGLSKQRINDYVG) form a DNA-binding region, H-T-H motif.

This chain is SPbeta prophage-derived uncharacterized HTH-type transcriptional regulator YotL (yotL), found in Bacillus subtilis (strain 168).